The chain runs to 201 residues: Holliday junction branch migration complex subunit RuvA (201 aa).

A domain I region spans residues 1–64 (MIGRLRGTLA…EDAHLLYGFA (64 aa)). The segment at 65–143 (EKRERELFRE…AWENMPTIAP (79 aa)) is domain II. Positions 144–152 (LVMEPRASA) are flexible linker. The segment at 153-201 (TVSSAEADAVSALIALGFKPQEASRAVAAVPGEDLSSEEMIRQALKGMV) is domain III.

This sequence belongs to the RuvA family. In terms of assembly, homotetramer. Forms an RuvA(8)-RuvB(12)-Holliday junction (HJ) complex. HJ DNA is sandwiched between 2 RuvA tetramers; dsDNA enters through RuvA and exits via RuvB. An RuvB hexamer assembles on each DNA strand where it exits the tetramer. Each RuvB hexamer is contacted by two RuvA subunits (via domain III) on 2 adjacent RuvB subunits; this complex drives branch migration. In the full resolvosome a probable DNA-RuvA(4)-RuvB(12)-RuvC(2) complex forms which resolves the HJ.

It localises to the cytoplasm. In terms of biological role, the RuvA-RuvB-RuvC complex processes Holliday junction (HJ) DNA during genetic recombination and DNA repair, while the RuvA-RuvB complex plays an important role in the rescue of blocked DNA replication forks via replication fork reversal (RFR). RuvA specifically binds to HJ cruciform DNA, conferring on it an open structure. The RuvB hexamer acts as an ATP-dependent pump, pulling dsDNA into and through the RuvAB complex. HJ branch migration allows RuvC to scan DNA until it finds its consensus sequence, where it cleaves and resolves the cruciform DNA. The protein is Holliday junction branch migration complex subunit RuvA of Pseudomonas aeruginosa (strain LESB58).